The following is a 676-amino-acid chain: RNA helicase NPH-II (676 aa).

The region spanning phenylalanine 172 to histidine 347 is the Helicase ATP-binding domain. Glycine 185–threonine 192 contributes to the ATP binding site. The short motif at aspartate 296–histidine 299 is the DEXH box element. The 170-residue stretch at asparagine 366 to asparagine 535 folds into the Helicase C-terminal domain.

The protein belongs to the DEAD box helicase family. DEAH subfamily. In terms of assembly, monomer.

It is found in the virion. It carries out the reaction ATP + H2O = ADP + phosphate + H(+). Its function is as follows. NTP-dependent helicase that catalyzes unidirectional unwinding of 3'tailed duplex RNAs and plays an important role during transcription of early mRNAs, presumably by preventing R-loop formation behind the elongating RNA polymerase. Might also play a role in the export of newly synthesized mRNA chains out of the core into the cytoplasm. Required for replication and propagation of viral particles. The sequence is that of RNA helicase NPH-II (OPG084) from Vaccinia virus (strain Ankara) (VACV).